Reading from the N-terminus, the 124-residue chain is MAEIAAELVAVEKALWSGTATAVIAETTEGEIGVLPGHEPLLGQLVENGVVIIRTTEGEKLVAAVQGGFLSVSSKKITVLADSAVWADEVDQADAEARVREASSEEEKSRAESELRAVKRSKEK.

Residues 97-124 (ARVREASSEEEKSRAESELRAVKRSKEK) form a disordered region.

It belongs to the ATPase epsilon chain family. F-type ATPases have 2 components, CF(1) - the catalytic core - and CF(0) - the membrane proton channel. CF(1) has five subunits: alpha(3), beta(3), gamma(1), delta(1), epsilon(1). CF(0) has three main subunits: a, b and c.

The protein localises to the cell membrane. Functionally, produces ATP from ADP in the presence of a proton gradient across the membrane. The polypeptide is ATP synthase epsilon chain (Corynebacterium urealyticum (strain ATCC 43042 / DSM 7109)).